A 154-amino-acid polypeptide reads, in one-letter code: Urease accessory protein UreE (154 aa).

Positions 135-154 are disordered; the sequence is PENGAYHGTGGHHHHHHDHE. The span at 144 to 154 shows a compositional bias: basic residues; that stretch reads GGHHHHHHDHE.

The protein belongs to the UreE family.

It localises to the cytoplasm. Its function is as follows. Involved in urease metallocenter assembly. Binds nickel. Probably functions as a nickel donor during metallocenter assembly. The sequence is that of Urease accessory protein UreE from Teredinibacter turnerae (strain ATCC 39867 / T7901).